A 54-amino-acid chain; its full sequence is Putative collagen-like domain-containing protein 065L (54 aa).

The segment at 1–54 (MRGLEAPGAVGPTGPSGAPGSQGPDGDVGGMGPEGPKGDDGPVGPKGPQGAAIF) is disordered. The Collagen-like domain occupies 7-51 (PGAVGPTGPSGAPGSQGPDGDVGGMGPEGPKGDDGPVGPKGPQGA). Residues 26–35 (GDVGGMGPEG) are compositionally biased toward gly residues. Low complexity predominate over residues 42–54 (PVGPKGPQGAAIF).

In Dryophytes versicolor (chameleon treefrog), this protein is Putative collagen-like domain-containing protein 065L.